A 418-amino-acid chain; its full sequence is Light-independent protochlorophyllide reductase subunit N (418 aa).

[4Fe-4S] cluster contacts are provided by Cys-17, Cys-42, and Cys-103.

Belongs to the BchN/ChlN family. As to quaternary structure, protochlorophyllide reductase is composed of three subunits; ChlL, ChlN and ChlB. Forms a heterotetramer of two ChlB and two ChlN subunits. The cofactor is [4Fe-4S] cluster.

It carries out the reaction chlorophyllide a + oxidized 2[4Fe-4S]-[ferredoxin] + 2 ADP + 2 phosphate = protochlorophyllide a + reduced 2[4Fe-4S]-[ferredoxin] + 2 ATP + 2 H2O. The protein operates within porphyrin-containing compound metabolism; chlorophyll biosynthesis (light-independent). Its function is as follows. Component of the dark-operative protochlorophyllide reductase (DPOR) that uses Mg-ATP and reduced ferredoxin to reduce ring D of protochlorophyllide (Pchlide) to form chlorophyllide a (Chlide). This reaction is light-independent. The NB-protein (ChlN-ChlB) is the catalytic component of the complex. This is Light-independent protochlorophyllide reductase subunit N from Prochlorococcus marinus (strain MIT 9313).